Here is a 260-residue protein sequence, read N- to C-terminus: Sodium channel modifier 1 (260 aa).

The Bipartite nuclear localization signal signature appears at 4 to 20; it reads KRDGDDSSQLNVLKKRR. A Matrin-type zinc finger spans residues 42-74; sequence YACTVCHHRPVFNTIDMLSVHRTGKKHLGGLQR. A disordered region spans residues 143–260; that stretch reads RNVYDPHSGP…EEEPPALPPS (118 aa). Residues 166-187 show a composition bias toward polar residues; it reads PGPSQPHTSLHSPPTGPCSSPT. Residues 202-221 show a composition bias toward basic and acidic residues; it reads KGEEKFRKEIADPERERNME. The span at 245 to 254 shows a compositional bias: acidic residues; it reads VEFDSDEEEP.

As to quaternary structure, component of the minor spliceosome, which splices U12-type introns.

The protein localises to the nucleus. The protein resides in the nucleoplasm. Its subcellular location is the nucleus speckle. As a component of the minor spliceosome, involved in the splicing of U12-type introns in pre-mRNAs. This Xenopus laevis (African clawed frog) protein is Sodium channel modifier 1 (scnm1).